The sequence spans 361 residues: Hydroxycarboxylate dehydrogenase B (361 aa).

Residues histidine 48, 122–124, 178–182, histidine 234, asparagine 270, and 313–316 each bind NAD(+); these read GRI, LLDYA, and GEWE.

It belongs to the LDH2/MDH2 oxidoreductase family.

The catalysed reaction is 2-hydroxyglutarate + NADP(+) = 2-oxoglutarate + NADPH + H(+). It catalyses the reaction 2-hydroxyglutarate + NAD(+) = 2-oxoglutarate + NADH + H(+). It carries out the reaction 3-phenyllactate + NADP(+) = 3-phenylpyruvate + NADPH + H(+). The enzyme catalyses 3-phenyllactate + NAD(+) = 3-phenylpyruvate + NADH + H(+). The catalysed reaction is (2R)-2-hydroxy-3-(4-hydroxyphenyl)propanoate + NAD(+) = 3-(4-hydroxyphenyl)pyruvate + NADH + H(+). It catalyses the reaction (2R)-2-hydroxy-3-(4-hydroxyphenyl)propanoate + NADP(+) = 3-(4-hydroxyphenyl)pyruvate + NADPH + H(+). It carries out the reaction (2R)-3-(3,4-dihydroxyphenyl)lactate + NADP(+) = 3-(3,4-dihydroxyphenyl)pyruvate + NADPH + H(+). The enzyme catalyses (2R)-3-(3,4-dihydroxyphenyl)lactate + NAD(+) = 3-(3,4-dihydroxyphenyl)pyruvate + NADH + H(+). Functionally, catalyzes the NAD(P)H-dependent reduction of 2-oxoglutarate, phenylpyruvate and (4-hydroxyphenyl)pyruvate, leading to the respective 2-hydroxycarboxylate in vitro. Shows a preference for NADPH over NADH as a redox partner. Do not catalyze the reverse reactions. The chain is Hydroxycarboxylate dehydrogenase B from Escherichia coli (strain K12).